Here is a 305-residue protein sequence, read N- to C-terminus: MANDKDIAAVGSILVNTKQDLTTRFRALFTLRNLGGAEAVKWISEAFVDESALLKHELAYCLGQMQDESAIPTLEAVLKDTNQEPMVRHEAGEALGAIGNPKVLELLKKYAEDPVIEVAETCQLAVKRLEWLMNGGEQTKDGTDENPYCSVDPAPPAQRKSVPELRTQLLDETLPLFDRYRAMFALRNLGTEEAVLALGDGLQCSSALFRHEIGYVLGQIQHEASIPQLQAALEKMDENAMVRHECAEALGSIGKEPCVQILERYRKDQERVVKESCEVALDMLEYENSSQFQYADGLLRLQSAH.

2 HEAT-like PBS-type repeats span residues 54 to 80 (LKHE…VLKD) and 87 to 113 (VRHE…YAED). Residues histidine 56, histidine 89, and glutamate 90 each coordinate Fe cation. Positions 137–160 (EQTKDGTDENPYCSVDPAPPAQRK) are disordered. HEAT-like PBS-type repeat units lie at residues 178 to 204 (DRYR…GLQC), 209 to 235 (FRHE…ALEK), and 242 to 268 (VRHE…YRKD). Residues histidine 211, histidine 244, and glutamate 245 each contribute to the Fe cation site.

This sequence belongs to the deoxyhypusine hydroxylase family. It depends on Fe(2+) as a cofactor.

It catalyses the reaction [eIF5A protein]-deoxyhypusine + AH2 + O2 = [eIF5A protein]-hypusine + A + H2O. It participates in protein modification; eIF5A hypusination. In terms of biological role, catalyzes the hydroxylation of the N(6)-(4-aminobutyl)-L-lysine intermediate produced by deoxyhypusine synthase/DHPS on a critical lysine of the eukaryotic translation initiation factor 5A/eIF-5A. This is the second step of the post-translational modification of that lysine into an unusual amino acid residue named hypusine. Hypusination is unique to mature eIF-5A factor and is essential for its function. The polypeptide is Deoxyhypusine hydroxylase (dohh) (Danio rerio (Zebrafish)).